The primary structure comprises 1378 residues: DNA-directed RNA polymerase subunit beta (1378 aa).

It belongs to the RNA polymerase beta chain family. As to quaternary structure, the RNAP catalytic core consists of 2 alpha, 1 beta, 1 beta' and 1 omega subunit. When a sigma factor is associated with the core the holoenzyme is formed, which can initiate transcription.

The enzyme catalyses RNA(n) + a ribonucleoside 5'-triphosphate = RNA(n+1) + diphosphate. DNA-dependent RNA polymerase catalyzes the transcription of DNA into RNA using the four ribonucleoside triphosphates as substrates. The protein is DNA-directed RNA polymerase subunit beta of Ruegeria pomeroyi (strain ATCC 700808 / DSM 15171 / DSS-3) (Silicibacter pomeroyi).